The following is a 133-amino-acid chain: Nickel-responsive regulator (133 aa).

H76, H87, H89, and C95 together coordinate Ni(2+).

It belongs to the transcriptional regulatory CopG/NikR family. Homotetramer. Ni(2+) is required as a cofactor.

In terms of biological role, transcriptional repressor of the nikABCDE operon. Is active in the presence of excessive concentrations of intracellular nickel. The sequence is that of Nickel-responsive regulator from Enterobacter sp. (strain 638).